The sequence spans 815 residues: uncharacterized protein (815 aa).

Disordered regions lie at residues 123-183, 249-274, 592-668, and 765-815; these read QSNT…QPST, NVNN…NNTN, IKQN…NLNS, and NNEE…EEIK. Composition is skewed to polar residues over residues 135–154 and 174–183; these read SIIT…TSTT and DSITVLQPST. Over residues 595–611 the composition is skewed to low complexity; that stretch reads NGSSSSNNNSKLSSTNS. Polar residues predominate over residues 612 to 639; that stretch reads GQTSDNPINSSNGGQSIKKQGSNLSLNR. Residues 640–668 are compositionally biased toward low complexity; sequence QQSSTKLNNQSNNNNNNNANTTNQNNLNS. Residues 765 to 782 are compositionally biased toward basic and acidic residues; the sequence is NNEEHNNNNKENNNENNK. Residues 783-809 show a composition bias toward low complexity; it reads ENINNNNNIINNNNDNNCNENNNNCNE.

This is an uncharacterized protein from Dictyostelium discoideum (Social amoeba).